A 105-amino-acid chain; its full sequence is Neuropeptide-like protein 32 (105 aa).

Residues 1–22 (MRQFNLLLVFCLIALTALPVFS) form the signal peptide. Positions 23-54 (FPNGLTMDSIDMEPMGAFDENGAADESPRVKR) are excised as a propeptide. The residue at position 59 (Gly59) is a Glycine amide. A Tryptophan amide modification is found at Trp64. Glycine amide occurs at positions 68, 73, and 80. Trp86 carries the tryptophan amide modification. Residues Gly91 and Gly98 each carry the glycine amide modification. At Trp103 the chain carries Tryptophan amide.

The protein belongs to the YARP (YGGW-amide related peptide) family.

The protein localises to the secreted. In terms of biological role, may have antimicrobial activity. This Caenorhabditis elegans protein is Neuropeptide-like protein 32 (nlp-32).